We begin with the raw amino-acid sequence, 707 residues long: Keratin, type II cytoskeletal 2 epidermal (707 aa).

A disordered region spans residues 1-20 (MSCQISCRSRRGGGGGGGGG). The head stretch occupies residues 1–198 (MSCQISCRSR…DPEIQNVKSQ (198 aa)). Arg-22 bears the Asymmetric dimethylarginine mark. 2 positions are modified to phosphoserine: Ser-25 and Ser-28. Residues 29-38 (AVVSGGSRRS) are compositionally biased toward low complexity. A disordered region spans residues 29-59 (AVVSGGSRRSNTSFSCISRHGGGRGGSGGGG). Arg-52 carries the omega-N-methylarginine modification. Residue Ser-64 is modified to Phosphoserine. Positions 199-234 (EREQIKTLNNKFASFIDKVRFLEQQNQVLRTKWELL) are coil 1A. The 314-residue stretch at 199–512 (EREQIKTLNN…KLLEGEECRM (314 aa)) folds into the IF rod domain. The linker 1 stretch occupies residues 235–253 (QQLDVGSRTTNLDPIFQAY). A coil 1B region spans residues 254 to 345 (IGMLKKQVDR…TLYDAELSQL (92 aa)). Residues 346 to 369 (QQDVTDTNVILSMDNNRNLDLDSI) are linker 12. The interval 370 to 508 (IAEVQNQYEM…ATYRKLLEGE (139 aa)) is coil 2. Positions 509–707 (ECRMSGDFSD…CGSGVTFSFR (199 aa)) are tail. The segment at 531-707 (SSVASKTGFG…CGSGVTFSFR (177 aa)) is disordered. Residues 539-700 (FGSGGQSSGG…GSGSGEGCGS (162 aa)) show a composition bias toward gly residues. Omega-N-methylarginine occurs at positions 555, 593, 607, and 675.

The protein belongs to the intermediate filament family. In terms of assembly, heterotetramer of two type I and two type II keratins. Associates with KRT10. As to expression, expressed predominantly in the suprabasal layers of the plantar epidermis outside of the footpads (at protein level). Expressed in the suprabasal layers of the interfollicular epidermis of the ear, in the interscale regions distant from the hair follicles in the tail, and in the soles of the footpads (at protein level). Expressed mainly in the middle spinous and granular cells of the epidermis of adult tail, nipple and footsole skin. Also found in ear.

The protein localises to the cytoplasm. Probably contributes to terminal cornification. Associated with keratinocyte activation, proliferation and keratinization. Required for maintenance of corneocytes and keratin filaments in suprabasal keratinocytes in the epidermis of the ear, potentially via moderation of expression and localization of keratins and their partner proteins. Plays a role in the establishment of the epidermal barrier on plantar skin. The polypeptide is Keratin, type II cytoskeletal 2 epidermal (Mus musculus (Mouse)).